The primary structure comprises 425 residues: Probable isoprenylcysteine alpha-carbonyl methylesterase ICMEL1 (425 aa).

The segment covering 1–10 (MQVELADRAA) has biased composition (basic and acidic residues). The segment at 1-42 (MQVELADRAAARPSETGEAPPSSPAAAAAASAAAEDAPLLPG) is disordered. A compositionally biased stretch (low complexity) spans 24 to 34 (PAAAAAASAAA). 2 helical membrane-spanning segments follow: residues 99 to 119 (FLAL…VVYY) and 154 to 174 (VVAF…GALL). Residues 160–162 (GGA) and 231–233 (QSA) each bind substrate. Residues Ser-232, Asp-334, and His-366 contribute to the active site.

The protein belongs to the AB hydrolase superfamily. Isoprenylcysteine methylesterase family.

The protein localises to the endoplasmic reticulum membrane. It is found in the golgi apparatus membrane. The catalysed reaction is [protein]-C-terminal S-[(2E,6E)-farnesyl]-L-cysteine methyl ester + H2O = [protein]-C-terminal S-[(2E,6E)-farnesyl]-L-cysteine + methanol + H(+). Functionally, catalyzes the demethylation of isoprenylcysteine methylesters. This chain is Probable isoprenylcysteine alpha-carbonyl methylesterase ICMEL1 (IMCEL1), found in Oryza sativa subsp. japonica (Rice).